Reading from the N-terminus, the 500-residue chain is Gamma-glutamylanilide synthase (500 aa).

A GS beta-grasp domain is found at 32–136 (LGLEMIRLSW…MLADLHWKSG (105 aa)). Residues 143–500 (PRGIMKKAVK…WEQKEYFNLL (358 aa)) form the GS catalytic domain.

Belongs to the glutamine synthetase family. Homohexamer.

It catalyses the reaction aniline + L-glutamate + ATP = N(5)-phenyl-L-glutamine + ADP + phosphate. Functionally, involved in the initial oxidation of aniline to catechol by the release of its amino group. Catalyzes the ATP-dependent ligation of L-glutamate to aniline to yield gamma-glutamylanilide (gamma-GA). AtdA1 has a broad substrate range and is able to convert the following anilines, including chlorinated and methylated forms of aniline: aniline (100%), o-chloroaniline (92%), m-chloroaniline (69%), p-chloroaniline (92%), o-methylaniline (40%), m-methylaniline (27%) and p-methylaniline (45%). This chain is Gamma-glutamylanilide synthase, found in Acinetobacter sp.